The chain runs to 118 residues: Altered inheritance of mitochondria protein 26, mitochondrial (118 aa).

3 helical membrane-spanning segments follow: residues 7–27 (EHLL…AYFF), 41–61 (LAVT…SIPA), and 98–118 (FLFC…GLSI).

The protein resides in the mitochondrion membrane. In terms of biological role, involved in selective mitochondria autophagy (mitophagy). The chain is Altered inheritance of mitochondria protein 26, mitochondrial (AIM26) from Saccharomyces cerevisiae (strain ATCC 204508 / S288c) (Baker's yeast).